A 2705-amino-acid polypeptide reads, in one-letter code: Teneurin-1 (2705 aa).

2 disordered regions span residues 1-73 (MEQM…STQD) and 135-222 (CLSS…TQDS). The Teneurin N-terminal domain maps to 1 to 299 (MEQMDCKPYQ…KPYRCCNWKC (299 aa)). Over 1 to 305 (MEQMDCKPYQ…NWKCTALSAT (305 aa)) the chain is Cytoplasmic. A compositionally biased stretch (basic and acidic residues) spans 32 to 46 (DGRKQRQSYDSRETL). Positions 62-65 (RKRK) match the Nuclear localization signal (NLS) motif. Residues 135–147 (CLSSRANSALSLT) are compositionally biased toward polar residues. The segment covering 148–157 (DTDHERKSDG) has biased composition (basic and acidic residues). The span at 173-182 (PLPPPPPPPH) shows a compositional bias: pro residues. The short motif at 271–278 (PPPRPLPR) is the Required for interaction with SORBS1 (Ten-1 ICD form) element. A helical transmembrane segment spans residues 306 to 326 (AITVTLALLLAYVIAVHLFGL). Residues 327–2705 (TWQLQPVEGQ…FMRQSEIGRR (2379 aa)) lie on the Extracellular side of the membrane. Asn414 carries an N-linked (GlcNAc...) asparagine glycan. EGF-like domains follow at residues 509–540 (VLDDCSTNCNGNGECISGHCHCFPGFLGPDCA), 541–572 (KDSCPVLCSGNGEYEKGHCVCRNGWKGPECDV), 573–605 (PEEQCIDPTCFGHGTCIMGVCICVPGYKGEICE), 606–638 (EEDCLDPMCSGHGVCVQGECHCSAGWGGVNCET), 639–672 (SLPICQEHCSGHGTFLLDVGLCSCEPQWTGSDCS), 673–702 (TELCTLDCGSHGVCSRGICQCEEGWVGPTC), 703–734 (EERTCHSHCAEHGQCKDGKCECSPGWEGDHCT), and 735–769 (IDGCPGLCYGNGRCTLDQNGWHCVCQVGWSGSGCN). Disulfide bonds link Cys513–Cys523, Cys517–Cys528, Cys530–Cys539, Cys548–Cys559, Cys561–Cys570, Cys577–Cys588, Cys582–Cys593, Cys595–Cys604, Cys609–Cys620, Cys614–Cys625, Cys627–Cys636, Cys647–Cys660, Cys662–Cys671, Cys676–Cys686, Cys680–Cys691, Cys693–Cys702, Cys707–Cys717, Cys711–Cys722, Cys724–Cys733, Cys738–Cys748, Cys742–Cys757, and Cys759–Cys768. Asn878 and Asn1057 each carry an N-linked (GlcNAc...) asparagine glycan. 5 NHL repeats span residues 1167-1192 (LFAPVALTSGPDGSVYIGDFNFVRRI), 1202-1246 (LELR…AKSL), 1272-1316 (SHCG…NGMI), 1331-1382 (LSCD…IAGR), and 1461-1504 (CFSG…VSRN). One copy of the YD 1 repeat lies at 1514 to 1533 (YEIASPADQELYQFTINGTH). N-linked (GlcNAc...) asparagine glycans are attached at residues Asn1530 and Asn1547. YD repeat units lie at residues 1550 to 1570 (YSGEGDVATITSSNGNSVHIR), 1588 to 1612 (YWLTISSNGVLKRVYAQGYNLALMT), 1613 to 1634 (YPGNTGLLATKSDENGWTTVYE), and 1635 to 1655 (YDSDGHLTNATFPTGEVSSFH). 5 N-linked (GlcNAc...) asparagine glycosylation sites follow: Asn1643, Asn1679, Asn1737, Asn1761, and Asn1822. YD repeat units follow at residues 1825–1844 (YSHSGLVTYIQRGTWTEKME), 1845–1865 (YDPSGNIISRTWADGKIWSYT), 1866–1884 (YLEKSVMLLLHSQRRYIFE), 1885–1905 (YDQSDYLLSVTMPSMVRHALQ), 1913–1929 (YRNIYTPPDSGAAFIQD), 1930–1949 (VTRDGRLLQTLYPGTGRRVL), 1950–1969 (YKYSKQSRLSEILYDTTQVT), 1972–1992 (YEESSGVIKTIHLMHDGFICT), 1995–2015 (YRQTGPLIGRQIFRFSEEGLV), 2065–2085 (YDLNQVITTTVMKHTKIFSAN), and 2093–2113 (YEILKSIAYWMTIQYDNMGRM). Asn2125 carries N-linked (GlcNAc...) asparagine glycosylation. YD repeat units lie at residues 2133–2153 (YDRDGQLQTVSVNDKTQWRYS), 2154–2174 (YDLNGNINLLSHGNSARLTPL), 2176–2196 (YDLRDRITRLGEIQYKMDEDG), 2208–2228 (YNSNGLLNKAYNKVSGWTVQY), and 2230–2250 (YDGLGRRVASKSSLGQHLQFF). N-linked (GlcNAc...) asparagine glycosylation occurs at Asn2265. YD repeat units lie at residues 2276–2293 (YDLQGHLIAMELSSGEEY) and 2294–2317 (YVACDNTGTPLAVFSSRGQVIKEI). Residue Asn2582 is glycosylated (N-linked (GlcNAc...) asparagine).

This sequence belongs to the tenascin family. Teneurin subfamily. In terms of assembly, homodimer; disulfide-linked. Heterodimer with other teneurins. Ten-1 ICD interacts with SORBS1 (via third SH3 domain). Interacts with MBD1 isoform 2. Post-translationally, derives from the plasma membrane form by proteolytic processing. Further proteolytic cleavage may be generated. Derives from the plasma membrane form by proteolytic cleavage and translocates to the nucleus. In terms of tissue distribution, expressed in the neurons of the developing visual system and in fetal brain.

Its subcellular location is the cell membrane. It localises to the nucleus. The protein resides in the nucleus speckle. It is found in the nucleus matrix. The protein localises to the cytoplasm. Its subcellular location is the cytoskeleton. Its function is as follows. Involved in neural development, regulating the establishment of proper connectivity within the nervous system. May function as a cellular signal transducer. Plays a role in the regulation of neuroplasticity in the limbic system. Mediates a rapid reorganization of actin- and tubulin-based cytoskeleton elements with an increase in dendritic arborization and spine density formation of neurons in the hippocampus and amygdala. Induces BDNF transcription inhibition in neurons. Activates the mitogen-activated protein (MAP) kinase 2 (MEK2) and extracellular signal-regulated kinase (ERK) cascade. Functionally, induces gene transcription activation. The protein is Teneurin-1 (TENM1) of Gallus gallus (Chicken).